The following is a 195-amino-acid chain: Shikimate kinase (195 aa).

Gly-31–Cys-36 serves as a coordination point for ATP. Ser-35 serves as a coordination point for Mg(2+). Substrate contacts are provided by Asp-53, Arg-77, and Gly-99. Arg-137 is a binding site for ATP. Position 156 (Arg-156) interacts with substrate.

It belongs to the shikimate kinase family. In terms of assembly, monomer. Requires Mg(2+) as cofactor.

The protein resides in the cytoplasm. It carries out the reaction shikimate + ATP = 3-phosphoshikimate + ADP + H(+). Its pathway is metabolic intermediate biosynthesis; chorismate biosynthesis; chorismate from D-erythrose 4-phosphate and phosphoenolpyruvate: step 5/7. In terms of biological role, catalyzes the specific phosphorylation of the 3-hydroxyl group of shikimic acid using ATP as a cosubstrate. The protein is Shikimate kinase of Paramagnetospirillum magneticum (strain ATCC 700264 / AMB-1) (Magnetospirillum magneticum).